The following is a 467-amino-acid chain: Glutamate--tRNA ligase (467 aa).

Positions 9-19 match the 'HIGH' region motif; it reads PSPTGYLHIGG. A 'KMSKS' region motif is present at residues 237 to 241; the sequence is KLSKR. Lys-240 contributes to the ATP binding site.

This sequence belongs to the class-I aminoacyl-tRNA synthetase family. Glutamate--tRNA ligase type 1 subfamily. Monomer.

The protein resides in the cytoplasm. It catalyses the reaction tRNA(Glu) + L-glutamate + ATP = L-glutamyl-tRNA(Glu) + AMP + diphosphate. In terms of biological role, catalyzes the attachment of glutamate to tRNA(Glu) in a two-step reaction: glutamate is first activated by ATP to form Glu-AMP and then transferred to the acceptor end of tRNA(Glu). This is Glutamate--tRNA ligase from Xylella fastidiosa (strain M23).